The primary structure comprises 443 residues: Zinc finger CCCH domain-containing protein 63 (443 aa).

Disordered regions lie at residues 1-29 (MDFD…MAPT) and 56-99 (LPGP…SSSW). 2 C3H1-type zinc fingers span residues 30–56 (DTRQ…HREL) and 109–136 (TKTE…HCWS). WD repeat units lie at residues 149–190 (GHEK…GVLK), 228–265 (GPVG…NCFE), 272–311 (GHTL…QTLT), 313–349 (HSSV…NLEV), 354–396 (KEEH…LFIR), and 404–442 (FAKQ…TAAL).

The sequence is that of Zinc finger CCCH domain-containing protein 63 (ZFWD2) from Arabidopsis thaliana (Mouse-ear cress).